A 304-amino-acid chain; its full sequence is N-acetylmuramic acid 6-phosphate etherase (304 aa).

Residues 62-225 form the SIS domain; that stretch reads IVQAFQNGGR…TTASMVMIGK (164 aa). Glutamate 90 (proton donor) is an active-site residue. Glutamate 121 is a catalytic residue.

It belongs to the GCKR-like family. MurNAc-6-P etherase subfamily. Homodimer.

The enzyme catalyses N-acetyl-D-muramate 6-phosphate + H2O = N-acetyl-D-glucosamine 6-phosphate + (R)-lactate. It functions in the pathway amino-sugar metabolism; 1,6-anhydro-N-acetylmuramate degradation. It participates in amino-sugar metabolism; N-acetylmuramate degradation. The protein operates within cell wall biogenesis; peptidoglycan recycling. Functionally, specifically catalyzes the cleavage of the D-lactyl ether substituent of MurNAc 6-phosphate, producing GlcNAc 6-phosphate and D-lactate. Together with AnmK, is also required for the utilization of anhydro-N-acetylmuramic acid (anhMurNAc) either imported from the medium or derived from its own cell wall murein, and thus plays a role in cell wall recycling. This is N-acetylmuramic acid 6-phosphate etherase from Actinobacillus pleuropneumoniae serotype 7 (strain AP76).